The primary structure comprises 670 residues: Major fimbrium tip subunit FimD (670 aa).

The N-terminal stretch at 1 to 24 (MRTNRILNIICPPILFLLVGFLFG) is a signal peptide. Cys25 carries N-palmitoyl cysteine lipidation. Cys25 carries S-diacylglycerol cysteine lipidation. Residues 25–50 (CVREDIESDMNETSSLFLQVQPYNQR) constitute a propeptide that is removed on maturation.

It belongs to the FimD family. In terms of assembly, fimbriae are composed of a major, structural subunit and the minor components FimC, FimD and FimE. Identified in a complex composed of FimC, FimD and FimE (in vitro). The complex interacts with host extracellular matrix proteins, including fibronectin and type I collagen. Interacts with host CXCR4.

It is found in the fimbrium. The protein localises to the cell outer membrane. Probably a component of the fimbrium tip. These long, filamentous pili are attached to the cell surface; they mediate biofilm formation, adhesion onto host cells and onto other bacteria that are part of the oral microbiome. They play an important role in invasion of periodontal tissues and are major virulence factors. FimC, FimD and FimE contribute to interaction with host CXCR4 and thereby down-regulate the TLR2-mediated host immune response. The polypeptide is Major fimbrium tip subunit FimD (Porphyromonas gingivalis (strain ATCC 33277 / DSM 20709 / CIP 103683 / JCM 12257 / NCTC 11834 / 2561)).